The primary structure comprises 99 residues: MICOS complex subunit MIC10 (99 aa).

Transmembrane regions (helical) follow at residues 27-43 and 50-66; these read RFVY…LLFF and WASI…SAYT.

It belongs to the MICOS complex subunit Mic10 family. As to quaternary structure, component of the mitochondrial contact site and cristae organizing system (MICOS) complex. The MICOS complex associates with mitochondrial outer membrane proteins. Present in a large lipid-enriched complex called mitochondrial transmembrane lipoprotein (MTL) complex made of proteins located in the two mitochondrial membranes, including the TOM complex and the core components of the MICOS complex and containing at least digalactosyldiacylglycerol (DGDG).

Its subcellular location is the mitochondrion inner membrane. In terms of biological role, component of the MICOS complex, a large protein complex of the mitochondrial inner membrane that plays crucial roles in the maintenance of crista junctions, inner membrane architecture, and formation of contact sites to the outer membrane. This Arabidopsis thaliana (Mouse-ear cress) protein is MICOS complex subunit MIC10.